The primary structure comprises 460 residues: Ribosome biogenesis protein YTM1 (460 aa).

The ubiquitin-like (UBL) domain stretch occupies residues 8-89 (VKIRFFTREK…EASLNVEYTR (82 aa)). The interval 99–460 (SFSNEDWVSS…INKGDNIFKN (362 aa)) is sufficient for interaction with ERB1 and association with 66S pre-ribosomes. WD repeat units lie at residues 101–140 (SNEDWVSSLDVGDGSKHIISGSYDGIVRTWDLSGNVQKQY), 142–180 (GHSGPIRAVKYISNTRLVSAGNDRTLRLWKTKNDDLKLT), 206–244 (GHKAPVVSIDVSDNSRILSASYDNSIGFWSTIYKEMTVV), 285–325 (SHTA…CIDT), 327–366 (TTSYSLLSIAQLSTLNLLACGSSARHITLHDPRVGASSKV), 373–413 (GHKN…PMYT), and 424–460 (GVNDKVFAVKWAEKVGIISAGQDKKIQINKGDNIFKN).

This sequence belongs to the WD repeat WDR12/YTM1 family. Component of the NOP7 complex, composed of ERB1, NOP7 and YTM1. The complex is held together by ERB1, which interacts with NOP7 via its N-terminal domain and with YTM1 via a high-affinity interaction between the seven-bladed beta-propeller domains of the 2 proteins. The NOP7 complex associates with the 66S pre-ribosome. Interacts (via UBL domain) with MDN1 (via VWFA/MIDAS domain).

The protein localises to the nucleus. Its subcellular location is the nucleolus. The protein resides in the nucleoplasm. Functionally, component of the NOP7 complex, which is required for maturation of the 25S and 5.8S ribosomal RNAs and formation of the 60S ribosome. The polypeptide is Ribosome biogenesis protein YTM1 (Saccharomyces cerevisiae (strain YJM789) (Baker's yeast)).